Reading from the N-terminus, the 68-residue chain is Protein SlyX homolog (68 aa).

The protein belongs to the SlyX family.

The protein is Protein SlyX homolog of Pseudomonas entomophila (strain L48).